The primary structure comprises 127 residues: Ribonuclease P protein component (127 aa).

A disordered region spans residues 99–127 (ALSASLRQQLRDGIDRSARRQEPAAERQR). Basic and acidic residues predominate over residues 107 to 127 (QLRDGIDRSARRQEPAAERQR).

It belongs to the RnpA family. Consists of a catalytic RNA component (M1 or rnpB) and a protein subunit.

It carries out the reaction Endonucleolytic cleavage of RNA, removing 5'-extranucleotides from tRNA precursor.. In terms of biological role, RNaseP catalyzes the removal of the 5'-leader sequence from pre-tRNA to produce the mature 5'-terminus. It can also cleave other RNA substrates such as 4.5S RNA. The protein component plays an auxiliary but essential role in vivo by binding to the 5'-leader sequence and broadening the substrate specificity of the ribozyme. In Mycobacteroides abscessus (strain ATCC 19977 / DSM 44196 / CCUG 20993 / CIP 104536 / JCM 13569 / NCTC 13031 / TMC 1543 / L948) (Mycobacterium abscessus), this protein is Ribonuclease P protein component.